We begin with the raw amino-acid sequence, 330 residues long: MQTNLLKPKTINVEQLGANRAKVTLEPFERGYGHTLGNALRRVLLSSMVGHAATEVTIAGVLHEYSSIDGVQEDVVNILLNLKGVVFKLHNRDEVTLSLRKDGEGPITAADIQTPHDVEIVNPDHVIMNLSHGGKIDMQIKVENGRGYVPGNVRRYGDESPKSIGRIVLDASFSPVKRVSYTVESARVEQRTDLDKLVLEIETNGAVTAEDAVRASAKILVEQLAVFAQLEGNELGAIINDPAPRSSQQFDPILLRPVDELELTVRSANCLKAENIYYIGDLIQRTENELLKTPNLGRKSLNEIKEVLASRGLTLGMRLESWPPAGLDKR.

Residues 1–231 (MQTNLLKPKT…EQLAVFAQLE (231 aa)) are alpha N-terminal domain (alpha-NTD). The interval 250–330 (FDPILLRPVD…SWPPAGLDKR (81 aa)) is alpha C-terminal domain (alpha-CTD).

Belongs to the RNA polymerase alpha chain family. Homodimer. The RNAP catalytic core consists of 2 alpha, 1 beta, 1 beta' and 1 omega subunit. When a sigma factor is associated with the core the holoenzyme is formed, which can initiate transcription.

It catalyses the reaction RNA(n) + a ribonucleoside 5'-triphosphate = RNA(n+1) + diphosphate. DNA-dependent RNA polymerase catalyzes the transcription of DNA into RNA using the four ribonucleoside triphosphates as substrates. In Polaromonas naphthalenivorans (strain CJ2), this protein is DNA-directed RNA polymerase subunit alpha.